We begin with the raw amino-acid sequence, 425 residues long: uncharacterized protein (425 aa).

The region spanning 55–181 (RYAHSLGVYE…DLDTDRMDYL (127 aa)) is the HD domain.

This is an uncharacterized protein from Mycoplasma genitalium (strain ATCC 33530 / DSM 19775 / NCTC 10195 / G37) (Mycoplasmoides genitalium).